The following is a 478-amino-acid chain: Antiviral innate immune response effector IFIT1 (478 aa).

6 TPR repeats span residues 52-85, 95-128, 139-174, 183-216, 218-249, and 251-284; these read VGIH…MQKE, LVTW…CKKP, PEID…DHEN, ISAY…NPDN, YLKV…NMSS, and TYVF…TPTS. Residue W147 coordinates mRNA. G190 is a binding site for RNA. K259, H289, Q290, and K336 together coordinate RNA. TPR repeat units follow at residues 305–339, 340–373, 378–412, and 437–470; these read ATKG…KPTF, EVAH…KPVV, QDIH…EQTS, and LESL…AADF.

This sequence belongs to the IFIT family. As to quaternary structure, component of an interferon-dependent multiprotein complex, at least composed of IFIT1, IFIT2 and IFIT3. Interacts (via TPR repeats 1-4) with RPL15. Interacts with STING1/MITA; could disrupt STING1 interaction with MAVS or TBK1, acting as a negative-feedback regulator of virus-triggered signaling. Interacts with EIF3E; this could be an alternative way to inhibit translation. Phosphorylated. Post-translationally, ISGylated.

The protein localises to the cytoplasm. Its function is as follows. Plays a key role in the innate immune response as part of an interferon-dependent multiprotein complex, recognizing and sequestering viral RNAs that lack host-specific 2'-O-methylation at their 5' cap. By distinguishing these RNAs from host mRNAs, inhibits their translation by competing with the translation initiation factor eIF4E. Could also prevent viral replication through its interaction with DNA replication origin-binding protein E1 of several viruses. Causes the translocation of E1 from the nucleus to the cytoplasm and can also inhibit its helicase activity in vitro. The protein is Antiviral innate immune response effector IFIT1 of Macaca fascicularis (Crab-eating macaque).